The chain runs to 162 residues: NADH-quinone oxidoreductase subunit I (162 aa).

4Fe-4S ferredoxin-type domains are found at residues Leu53–Glu83 and Thr93–Ile122. [4Fe-4S] cluster contacts are provided by Cys63, Cys66, Cys69, Cys73, Cys102, Cys105, Cys108, and Cys112.

This sequence belongs to the complex I 23 kDa subunit family. NDH-1 is composed of 14 different subunits. Subunits NuoA, H, J, K, L, M, N constitute the membrane sector of the complex. It depends on [4Fe-4S] cluster as a cofactor.

Its subcellular location is the cell inner membrane. The enzyme catalyses a quinone + NADH + 5 H(+)(in) = a quinol + NAD(+) + 4 H(+)(out). In terms of biological role, NDH-1 shuttles electrons from NADH, via FMN and iron-sulfur (Fe-S) centers, to quinones in the respiratory chain. The immediate electron acceptor for the enzyme in this species is believed to be ubiquinone. Couples the redox reaction to proton translocation (for every two electrons transferred, four hydrogen ions are translocated across the cytoplasmic membrane), and thus conserves the redox energy in a proton gradient. The protein is NADH-quinone oxidoreductase subunit I of Thiobacillus denitrificans (strain ATCC 25259 / T1).